We begin with the raw amino-acid sequence, 396 residues long: NADH-quinone oxidoreductase subunit D (396 aa).

It belongs to the complex I 49 kDa subunit family. NDH-1 is composed of 14 different subunits. Subunits NuoB, C, D, E, F, and G constitute the peripheral sector of the complex.

The protein localises to the cell inner membrane. The catalysed reaction is a quinone + NADH + 5 H(+)(in) = a quinol + NAD(+) + 4 H(+)(out). Functionally, NDH-1 shuttles electrons from NADH, via FMN and iron-sulfur (Fe-S) centers, to quinones in the respiratory chain. The immediate electron acceptor for the enzyme in this species is believed to be ubiquinone. Couples the redox reaction to proton translocation (for every two electrons transferred, four hydrogen ions are translocated across the cytoplasmic membrane), and thus conserves the redox energy in a proton gradient. This is NADH-quinone oxidoreductase subunit D from Chelativorans sp. (strain BNC1).